Consider the following 341-residue polypeptide: L-threonine 3-dehydrogenase (341 aa).

C38 is a binding site for Zn(2+). Catalysis depends on charge relay system residues T40 and H43. H63, E64, C93, C96, C99, and C107 together coordinate Zn(2+). Residues I175, D195, R200, 262 to 264 (LGI), and 286 to 287 (IY) each bind NAD(+).

It belongs to the zinc-containing alcohol dehydrogenase family. As to quaternary structure, homotetramer. It depends on Zn(2+) as a cofactor.

The protein localises to the cytoplasm. It catalyses the reaction L-threonine + NAD(+) = (2S)-2-amino-3-oxobutanoate + NADH + H(+). The protein operates within amino-acid degradation; L-threonine degradation via oxydo-reductase pathway; glycine from L-threonine: step 1/2. In terms of biological role, catalyzes the NAD(+)-dependent oxidation of L-threonine to 2-amino-3-ketobutyrate. The protein is L-threonine 3-dehydrogenase of Shewanella putrefaciens (strain CN-32 / ATCC BAA-453).